The primary structure comprises 125 residues: Small ribosomal subunit protein uS12 (125 aa).

Residue Asp-89 is modified to 3-methylthioaspartic acid.

This sequence belongs to the universal ribosomal protein uS12 family. In terms of assembly, part of the 30S ribosomal subunit. Contacts proteins S8 and S17. May interact with IF1 in the 30S initiation complex.

Functionally, with S4 and S5 plays an important role in translational accuracy. In terms of biological role, interacts with and stabilizes bases of the 16S rRNA that are involved in tRNA selection in the A site and with the mRNA backbone. Located at the interface of the 30S and 50S subunits, it traverses the body of the 30S subunit contacting proteins on the other side and probably holding the rRNA structure together. The combined cluster of proteins S8, S12 and S17 appears to hold together the shoulder and platform of the 30S subunit. This chain is Small ribosomal subunit protein uS12, found in Clostridium kluyveri (strain ATCC 8527 / DSM 555 / NBRC 12016 / NCIMB 10680 / K1).